The following is a 120-amino-acid chain: Dense granule protein 5 (120 aa).

Positions 1 to 25 (MASVKRVVVAVMIVNVLALIFVGVA) are cleaved as a signal peptide. The disordered stretch occupies residues 27 to 59 (STRDVGSGGDDSEGARGREQQQVQQHEQNEDRS). Residues 76–93 (AVGLAAAVVAVVSLLRLL) form a helical membrane-spanning segment. A compositionally biased stretch (basic and acidic residues) spans 100-109 (AIQEESKESA). Residues 100-120 (AIQEESKESATAEEEEVAEEE) are disordered. The segment covering 110–120 (TAEEEEVAEEE) has biased composition (acidic residues).

The protein resides in the secreted. It is found in the parasitophorous vacuole lumen. The protein localises to the parasitophorous vacuole membrane. Its subcellular location is the cytoplasmic vesicle. It localises to the secretory vesicle. Its function is as follows. Plays a role in the function of the cyst and parasitophorous vacuole membranes and therefore in host-parasite interactions. This Toxoplasma gondii protein is Dense granule protein 5 (GRA5).